The sequence spans 414 residues: Secernin-1 (414 aa).

Belongs to the peptidase C69 family. Secernin subfamily.

The protein localises to the cytoplasm. Its function is as follows. Regulates exocytosis in mast cells. Increases both the extent of secretion and the sensitivity of mast cells to stimulation with calcium. This chain is Secernin-1 (Scrn1), found in Rattus norvegicus (Rat).